A 471-amino-acid polypeptide reads, in one-letter code: MAQSVADVMKLVKENDVKFVDFRFTDTKGKEQHVSVPTSHFDDDKFESGHAFDGSSIAGWKGIEASDMLLMPDSNTAFIDPFYEEPTLVLTCDVVEPSDGKGYDRDPRSIAKRAEAYLKSTGLGDTAFFGPEPEFFIFDGVTWNVDMQGCFVKVHSEEAPWSSGKEFEHGNSGHRPGKKGGYFPVAPIDTFQDMRSEMCLILESLGIPVEVHHHEVAGQGQNEIGTRFSTLVQRADWTQLQKYVIQNVAHTYGKTATFMPKPIVGDNGSGMHVHQSVWKDGQNLFAGNGYAGLSEFALYYIGGIIKHARALNAITNPGTNSYKRLVPGFEAPVKLAYSARNRSASIRIPYVANPKGRRIETRFPDPLMNPYLGFSALLMAGLDGVMNKIHPGEAADKNLYDLPPEEDAKIPTVCNSLDQSLEYLDNDREFLTRGGVFSNSMLDAYIELKMEEVTRFRMTTHPVEFEMYYSL.

In terms of domain architecture, GS beta-grasp spans 15–100 (NDVKFVDFRF…TCDVVEPSDG (86 aa)). One can recognise a GS catalytic domain in the interval 107-471 (PRSIAKRAEA…PVEFEMYYSL (365 aa)).

The protein belongs to the glutamine synthetase family.

The enzyme catalyses 3-hydroxyaminophenol = aminohydroquinone. Is inhibited by H(2)O(2). 1,10-phenanthroline inhibits the activity slightly, but other metal cation chelators such as EDTA or tiron have no effect on the activity. Divalent metal cations and hydroxylamine have also no effect on the activity. Due to the relationship of the protein with glutamine synthetases, glutamate and glutamine were tested as inhibitors; neither preincubation of the compounds with the enzyme nor their addition to the assay buffer affected 3HAP mutase activity. Functionally, catalyzes the isomerization of 3-hydroxylaminophenol (3HAP) to aminohydroquinone, a step in the degradative pathway of 3-nitrophenol. The enzymatic reaction is regiospecific since it leads to the formation of aminohydroquinone exclusively, without producing the isomeric 4-aminocatechol. Can also isomerize other hydroxylaminoaromatic compounds, such as hydroxylaminobenzene to a mixture of 2-aminophenol and 4-aminophenol, 4-hydroxylaminotoluene to 6-amino-m-cresol, and 2-chloro-5-hydroxylaminophenol to 2-amino-5-chlorohydroquinone. Does not act on 4-hydroxylaminobenzoate. The chain is 3-hydroxylaminophenol mutase from Cupriavidus pinatubonensis (strain JMP 134 / LMG 1197) (Cupriavidus necator (strain JMP 134)).